The primary structure comprises 372 residues: Flagellar P-ring protein (372 aa).

A signal peptide spans 1–29 (MPARPIPVPAFALALALAAALAVPAPAAA).

It belongs to the FlgI family. The basal body constitutes a major portion of the flagellar organelle and consists of four rings (L,P,S, and M) mounted on a central rod.

Its subcellular location is the periplasm. It localises to the bacterial flagellum basal body. Assembles around the rod to form the L-ring and probably protects the motor/basal body from shearing forces during rotation. In Anaeromyxobacter dehalogenans (strain 2CP-1 / ATCC BAA-258), this protein is Flagellar P-ring protein.